Here is a 397-residue protein sequence, read N- to C-terminus: Acetate kinase (397 aa).

Asparagine 8 serves as a coordination point for Mg(2+). Lysine 15 serves as a coordination point for ATP. Residue arginine 90 participates in substrate binding. The active-site Proton donor/acceptor is aspartate 147. ATP is bound by residues 207-211, 283-285, and 330-334; these read HLGAG, DMR, and GVGEN. Glutamate 383 is a binding site for Mg(2+).

It belongs to the acetokinase family. In terms of assembly, homodimer. It depends on Mg(2+) as a cofactor. Requires Mn(2+) as cofactor.

Its subcellular location is the cytoplasm. It catalyses the reaction acetate + ATP = acetyl phosphate + ADP. It functions in the pathway metabolic intermediate biosynthesis; acetyl-CoA biosynthesis; acetyl-CoA from acetate: step 1/2. Functionally, catalyzes the formation of acetyl phosphate from acetate and ATP. Can also catalyze the reverse reaction. The polypeptide is Acetate kinase (Fructilactobacillus sanfranciscensis (Lactobacillus sanfranciscensis)).